Here is a 288-residue protein sequence, read N- to C-terminus: N-acetyltransferase ECO1 (288 aa).

A disordered region spans residues 1–50; the sequence is MKRDITQLLSPELSQSSSRNDKKRKPTNSNKKVQTVLNFPSSSPNASQST. A compositionally biased stretch (low complexity) spans 7–18; that stretch reads QLLSPELSQSSS. Polar residues predominate over residues 27–50; it reads TNSNKKVQTVLNFPSSSPNASQST. The segment at 50–74 adopts a CCHH-type zinc-finger fold; it reads TTCPTCGMTYYSHVSKDNDVHNKYH.

The protein belongs to the acetyltransferase family. ECO subfamily.

Its subcellular location is the nucleus. Functionally, probable acetyltransferase required for the establishment of sister chromatid cohesion and couple the processes of cohesion and DNA replication to ensure that only sister chromatids become paired together. In contrast to the structural cohesins, the deposition and establishment factors are required only during S phase. Acts by acetylating the cohesin complex component SMC3. The protein is N-acetyltransferase ECO1 (ECO1) of Debaryomyces hansenii (strain ATCC 36239 / CBS 767 / BCRC 21394 / JCM 1990 / NBRC 0083 / IGC 2968) (Yeast).